Reading from the N-terminus, the 173-residue chain is Dual-action ribosomal maturation protein DarP (173 aa).

This sequence belongs to the DarP family.

The protein resides in the cytoplasm. Functionally, member of a network of 50S ribosomal subunit biogenesis factors which assembles along the 30S-50S interface, preventing incorrect 23S rRNA structures from forming. Promotes peptidyl transferase center (PTC) maturation. The protein is Dual-action ribosomal maturation protein DarP of Pseudomonas putida (strain W619).